A 624-amino-acid chain; its full sequence is NADPH-dependent diflavin oxidoreductase 1 (624 aa).

Positions 6–168 constitute a Flavodoxin-like domain; that stretch reads IVILYGSETG…VYYEFEKRII (163 aa). FMN contacts are provided by residues 12–17, 59–62, 106–115, and Glu142; these read SETGNA, STTG, and LGDSSYPRFN. The FAD-binding FR-type domain occupies 226–474; the sequence is ETIRHGTVKK…LQNNHLLHED (249 aa). FAD contacts are provided by residues Arg384, 414-417, and 446-449; these read RFYS and GLCT. NADP(+) contacts are provided by residues 539–540 and 548–552; these read SR and AKYVQ. Trp624 lines the FAD pocket.

The protein belongs to the NADPH-dependent diflavin oxidoreductase NDOR1 family. This sequence in the N-terminal section; belongs to the flavodoxin family. It in the C-terminal section; belongs to the flavoprotein pyridine nucleotide cytochrome reductase family. As to quaternary structure, interacts with DRE2; as part of the cytosolic iron-sulfur (Fe-S) protein assembly (CIA) machinery. It depends on FAD as a cofactor. Requires FMN as cofactor.

Its subcellular location is the cytoplasm. The protein localises to the mitochondrion. It catalyses the reaction 2 oxidized [2Fe-2S]-[protein] + NADPH = 2 reduced [2Fe-2S]-[protein] + NADP(+) + H(+). Functionally, NADPH-dependent reductase which is a central component of the cytosolic iron-sulfur (Fe-S) protein assembly (CIA) machinery. Transfers electrons from NADPH via its FAD and FMN prosthetic groups to the [2Fe-2S] cluster of DRE2, another key component of the CIA machinery. In turn, this reduced cluster provides electrons for assembly of cytosolic iron-sulfur cluster proteins. Positively controls H(2)O(2)-induced cell death. The chain is NADPH-dependent diflavin oxidoreductase 1 from Kluyveromyces lactis (strain ATCC 8585 / CBS 2359 / DSM 70799 / NBRC 1267 / NRRL Y-1140 / WM37) (Yeast).